A 384-amino-acid polypeptide reads, in one-letter code: Flap endonuclease 1 (384 aa).

An N-domain region spans residues 1 to 105; it reads MGIKKLTDLI…GELAKRQARR (105 aa). Residue aspartate 34 participates in Mg(2+) binding. Residue arginine 71 coordinates DNA. The Mg(2+) site is built by aspartate 87, glutamate 159, glutamate 161, aspartate 180, and aspartate 182. The interval 123–254 is I-domain; sequence EVQKFAKRVI…KRAIELIQKH (132 aa). DNA is bound at residue glutamate 159. Residues glycine 232 and aspartate 234 each coordinate DNA. Aspartate 234 contacts Mg(2+). Residues 338-346 are interaction with PCNA; sequence VQSRMDSFI. The disordered stretch occupies residues 349 to 384; that stretch reads IKKPEDPNDKKKKVTKTPSKPSAKTSKKSSSTFKRK. The segment covering 364 to 384 has biased composition (low complexity); sequence KTPSKPSAKTSKKSSSTFKRK.

Belongs to the XPG/RAD2 endonuclease family. FEN1 subfamily. In terms of assembly, interacts with PCNA. Three molecules of repg bind to one PCNA trimer with each molecule binding to one PCNA monomer. PCNA stimulates the nuclease activity without altering cleavage specificity. Mg(2+) is required as a cofactor. In terms of processing, phosphorylated. Phosphorylation upon DNA damage induces relocalization to the nuclear plasma.

It is found in the nucleus. The protein resides in the nucleolus. Its subcellular location is the nucleoplasm. It localises to the mitochondrion. Functionally, structure-specific nuclease with 5'-flap endonuclease and 5'-3' exonuclease activities involved in DNA replication and repair. During DNA replication, cleaves the 5'-overhanging flap structure that is generated by displacement synthesis when DNA polymerase encounters the 5'-end of a downstream Okazaki fragment. It enters the flap from the 5'-end and then tracks to cleave the flap base, leaving a nick for ligation. Also involved in the long patch base excision repair (LP-BER) pathway, by cleaving within the apurinic/apyrimidinic (AP) site-terminated flap. Acts as a genome stabilization factor that prevents flaps from equilibrating into structures that lead to duplications and deletions. Also possesses 5'-3' exonuclease activity on nicked or gapped double-stranded DNA, and exhibits RNase H activity. Also involved in replication and repair of rDNA and in repairing mitochondrial DNA. This is Flap endonuclease 1 from Dictyostelium discoideum (Social amoeba).